Here is a 333-residue protein sequence, read N- to C-terminus: Ornithine carbamoyltransferase (333 aa).

Carbamoyl phosphate-binding positions include 56–59, Arg-107, and 134–137; these read STRT and HPTQ. Residues Asn-167, Asp-231, and 235–236 each bind L-ornithine; that span reads SM. Carbamoyl phosphate contacts are provided by residues 273 to 274 and Arg-318; that span reads CL.

Belongs to the aspartate/ornithine carbamoyltransferase superfamily. OTCase family.

The protein resides in the cytoplasm. It catalyses the reaction carbamoyl phosphate + L-ornithine = L-citrulline + phosphate + H(+). It functions in the pathway amino-acid degradation; L-arginine degradation via ADI pathway; carbamoyl phosphate from L-arginine: step 2/2. In terms of biological role, reversibly catalyzes the transfer of the carbamoyl group from carbamoyl phosphate (CP) to the N(epsilon) atom of ornithine (ORN) to produce L-citrulline. The protein is Ornithine carbamoyltransferase of Clostridium botulinum (strain 657 / Type Ba4).